The following is a 774-amino-acid chain: Ent-beyerene synthase KSL4, chloroplastic (774 aa).

The N-terminal 35 residues, 1–35, are a transit peptide targeting the chloroplast; it reads MLLGSTNTLRISSHGKEWEGKTLTGMPLGKVNQRV. Mg(2+) is bound by residues aspartate 525, aspartate 529, asparagine 668, aspartate 669, threonine 672, and glutamate 676. The short motif at 525 to 529 is the DDXXD motif element; sequence DDFFD.

This sequence belongs to the terpene synthase family. Mg(2+) serves as cofactor.

The protein resides in the plastid. The protein localises to the chloroplast. It catalyses the reaction ent-copalyl diphosphate = ent-beyerene + diphosphate. The catalysed reaction is ent-copalyl diphosphate = ent-atiserene + diphosphate. It carries out the reaction ent-copalyl diphosphate = ent-kaur-16-ene + diphosphate. The protein operates within secondary metabolite biosynthesis; terpenoid biosynthesis. Its function is as follows. Diterpene cyclase involved in the biosynthesis of labdane-related diterpenoids (LRDs) natural products. Catalyzes the cyclization of ent-CDP into ent-beyerene as a major and ent-kaurene and ent-atiserene as minor products. This chain is Ent-beyerene synthase KSL4, chloroplastic, found in Ricinus communis (Castor bean).